The chain runs to 310 residues: GTPase Era (310 aa).

Residues 17–184 (RSGFVALIGA…MDYLAERLPE (168 aa)) enclose the Era-type G domain. Positions 25–32 (GATNAGKS) are G1. 25–32 (GATNAGKS) contacts GTP. The G2 stretch occupies residues 51-55 (QTTRA). The G3 stretch occupies residues 72–75 (DTPG). GTP is bound by residues 72–76 (DTPGI) and 134–137 (NKVD). A G4 region spans residues 134–137 (NKVD). A G5 region spans residues 163–165 (ISA). A KH type-2 domain is found at 215 to 292 (LHQELPYASH…HLFLFVKVRE (78 aa)).

It belongs to the TRAFAC class TrmE-Era-EngA-EngB-Septin-like GTPase superfamily. Era GTPase family. As to quaternary structure, monomer.

Its subcellular location is the cytoplasm. The protein resides in the cell inner membrane. Functionally, an essential GTPase that binds both GDP and GTP, with rapid nucleotide exchange. Plays a role in 16S rRNA processing and 30S ribosomal subunit biogenesis and possibly also in cell cycle regulation and energy metabolism. The polypeptide is GTPase Era (Sinorhizobium medicae (strain WSM419) (Ensifer medicae)).